The following is a 1008-amino-acid chain: PWWP domain-containing protein 3 (1008 aa).

Positions 78-122 form a coiled coil; it reads VSSLLKLKEDVEEEEEEEEEEEEEEEDGEDEEEEEEEEEEEEEEE. The interval 84–124 is disordered; it reads LKEDVEEEEEEEEEEEEEEEDGEDEEEEEEEEEEEEEEEHG. The span at 87–122 shows a compositional bias: acidic residues; the sequence is DVEEEEEEEEEEEEEEEDGEDEEEEEEEEEEEEEEE. The PWWP domain maps to 127 to 188; the sequence is VGDFVWGKIK…ASQLKPFAES (62 aa). Disordered stretches follow at residues 307-339, 399-606, and 668-874; these read EYHE…GLQW, ETEP…LGQE, and NHKF…GPGS. The span at 321–330 shows a compositional bias: acidic residues; that stretch reads NNDDDDDDEE. Over residues 399 to 409 the composition is skewed to basic and acidic residues; it reads ETEPADGDVKS. Residues 473 to 490 are compositionally biased toward acidic residues; that stretch reads DDGDDDGSGDKEESEEKE. Basic and acidic residues-rich tracts occupy residues 511 to 522, 677 to 687, and 707 to 725; these read RFDDSVVERSTE, SSDKEKEELSE, and QKAE…TDKH. Basic residues predominate over residues 726-738; the sequence is GKMKKERKRKKSE. Composition is skewed to basic and acidic residues over residues 739-758, 768-787, and 794-818; these read SKKE…ESTK, SKKQ…ESTK, and NPES…ESTK. 3 short sequence motifs (nuclear localization signal) span residues 786 to 793, 809 to 816, and 841 to 848; these read TKKERKRK, TRKESVES, and EKKKKKKR. Residues 804-824 are a coiled coil; it reads VEEEETRKESVESTKKERKRK. Over residues 842 to 854 the composition is skewed to basic residues; that stretch reads KKKKKKREGKSKK.

It belongs to the PDP family. In terms of assembly, interacts with DEK3. Binds to LHP1, MSI4/FVE and MSI5. Component of the PRC2 (polycomb repressive complex 2) complex which regulates histone methylation on histone H3K27.

Its subcellular location is the nucleus. In terms of biological role, together with PDP1, PDP2 and PDP6, interacts with MSI4/FVE and MSI5 to suppress FLC, MAF4 and MAF5 expression by regulating the function of the PRC2 complex and modulating H3K27me3 level, thereby promoting flowering. The sequence is that of PWWP domain-containing protein 3 from Arabidopsis thaliana (Mouse-ear cress).